The sequence spans 944 residues: Isoleucine--tRNA ligase (944 aa).

A 'HIGH' region motif is present at residues 58–68 (PYANGSIHIGH). Glu563 serves as a coordination point for L-isoleucyl-5'-AMP. The 'KMSKS' region signature appears at 604-608 (KMSKS). Lys607 contacts ATP. Zn(2+) contacts are provided by Cys907, Cys910, Cys927, and Cys930.

This sequence belongs to the class-I aminoacyl-tRNA synthetase family. IleS type 1 subfamily. In terms of assembly, monomer. The cofactor is Zn(2+).

Its subcellular location is the cytoplasm. The enzyme catalyses tRNA(Ile) + L-isoleucine + ATP = L-isoleucyl-tRNA(Ile) + AMP + diphosphate. In terms of biological role, catalyzes the attachment of isoleucine to tRNA(Ile). As IleRS can inadvertently accommodate and process structurally similar amino acids such as valine, to avoid such errors it has two additional distinct tRNA(Ile)-dependent editing activities. One activity is designated as 'pretransfer' editing and involves the hydrolysis of activated Val-AMP. The other activity is designated 'posttransfer' editing and involves deacylation of mischarged Val-tRNA(Ile). The polypeptide is Isoleucine--tRNA ligase (Salmonella paratyphi A (strain ATCC 9150 / SARB42)).